Consider the following 341-residue polypeptide: Cytoplasmic tRNA 2-thiolation protein 1 (341 aa).

The protein belongs to the TtcA family. CTU1/NCS6/ATPBD3 subfamily.

Its subcellular location is the cytoplasm. It participates in tRNA modification; 5-methoxycarbonylmethyl-2-thiouridine-tRNA biosynthesis. Its function is as follows. Plays a central role in 2-thiolation of mcm(5)S(2)U at tRNA wobble positions of tRNA(Lys), tRNA(Glu) and tRNA(Gln). Directly binds tRNAs and probably acts by catalyzing adenylation of tRNAs, an intermediate required for 2-thiolation. It is unclear whether it acts as a sulfurtransferase that transfers sulfur from thiocarboxylated URM1 onto the uridine of tRNAs at wobble position. In Aedes aegypti (Yellowfever mosquito), this protein is Cytoplasmic tRNA 2-thiolation protein 1.